A 532-amino-acid polypeptide reads, in one-letter code: Carboxypeptidase Y (532 aa).

Residues 1-20 form the signal peptide; the sequence is MKAFTSLLCGLGLSTTLAKA. The propeptide at 21–111 is mediates translocation across the endoplasmic reticulum, renders the enzyme inactive during transit, and targets the molecule to the vacuole; that stretch reads ISLQRPLGLD…AIENYQLRVN (91 aa). Residues 24 to 27 carry the Vacuolar targeting signal motif; the sequence is QRPL. N124 and N198 each carry an N-linked (GlcNAc...) (high mannose) asparagine glycan. 5 disulfide bridges follow: C167/C409, C304/C318, C328/C351, C335/C344, and C373/C379. The active site involves S257. N279 carries an N-linked (GlcNAc...) (high mannose) asparagine glycan. D449 is an active-site residue. C452 lines the substrate pocket. N479 carries N-linked (GlcNAc...) (high mannose) asparagine glycosylation. Residue H508 is part of the active site. Substrate is bound at residue M509.

Belongs to the peptidase S10 family. Enters the endoplasmic reticulum as an inactive zymogen and is modified by four N-linked core oligosaccharides, giving rise to a precursor known as P1 (67 kDa). As P1 transits through the Golgi, extension of its core oligosaccharides leads to the Golgi-modified P2 precursor (69 kDa). P2 is sorted away from secretory proteins at or beyond a late Golgi compartment and is subsequently delivered to the vacuole via a prevacuolar endosome-like compartment. Upon arrival in the vacuole, the N-terminal prosegment of P2 is cleaved by vacuolar proteases to yield the enzymatically active mature vacuolar form of CPY (61 kDa). Post-translationally, the four high mannose core N-glycans found in mature CPY are Man(11-15)GlcNAc(2) at Asn-124, Man(8-12)GlcNAc(2) at Asn-198, Man(9-14)GlcNAc(2) at Asn-279 and phosphorylated Man(12-17)GlcNAc(2) as well as Man(11-16)GlcNAc(2) at Asn-479.

The protein resides in the vacuole lumen. The enzyme catalyses Release of a C-terminal amino acid with broad specificity.. Its activity is regulated as follows. Inhibited by ZPCK. In terms of biological role, vacuolar serine-type carboxypeptidase involved in degradation of small peptides. Digests preferentially peptides containing an aliphatic or hydrophobic residue in P1' position, as well as methionine, leucine or phenylalanine in P1 position of ester substrate. Also plays a role in breakdown of the autophagic body and the autophagosome-dependent protein synthesis. Plays a key role in phytochelatin (PC) synthesis from glutathione (GSH) by cleaving the Gly from GSH and form the PC-peptides of the structure (gamma-Glu-Cys)2-Gly. Also involved in resistance to xenobiotics via the degradation of glutathione-S-conjugates. This Saccharomyces cerevisiae (strain ATCC 204508 / S288c) (Baker's yeast) protein is Carboxypeptidase Y.